The sequence spans 361 residues: MTVPHIPRGPVMADIAAFRLTEEEKQRLLDPAIGGIILFRRNFQNIEQLKTLTAEIKALRTPELIIAVDHEGGRVQRFIEGFTRLPAMSTLGEIWDSEGAETAETHAEHIGWVLATELSACGIDLSFTPVLDLDWGNCAVIGNRSFHRNPEAVARLALALQKGLAKGGMKSCGKHFPGHGFVEGDSHLVLPEDGRSLDELEAADLAPFRIMSREGMAAVMPAHVVYPQVDTKPAGFSEIWLKQILRRDIGFKGVIFSDDLTMEGACGAGGIKERARISFEAGCDIILVCNRPDLVDELRDGFTIPDNQDLAGRWQYMENSLGHEAVQAVIQTTGFQAAQAFVAGLASPQDTAGGVKVGEAF.

Substrate-binding positions include Asp-69, Arg-77, Arg-144, and 174-175 (KH). His-187 serves as the catalytic Proton donor/acceptor. The Nucleophile role is filled by Asp-258.

This sequence belongs to the glycosyl hydrolase 3 family. NagZ subfamily.

It is found in the cytoplasm. The catalysed reaction is Hydrolysis of terminal non-reducing N-acetyl-D-hexosamine residues in N-acetyl-beta-D-hexosaminides.. It participates in cell wall biogenesis; peptidoglycan recycling. Functionally, plays a role in peptidoglycan recycling by cleaving the terminal beta-1,4-linked N-acetylglucosamine (GlcNAc) from peptide-linked peptidoglycan fragments, giving rise to free GlcNAc, anhydro-N-acetylmuramic acid and anhydro-N-acetylmuramic acid-linked peptides. The chain is Beta-hexosaminidase from Neisseria gonorrhoeae (strain NCCP11945).